Reading from the N-terminus, the 400-residue chain is Chalcone synthase 7 (400 aa).

Residue Cys168 is part of the active site.

It belongs to the thiolase-like superfamily. Chalcone/stilbene synthases family.

It carries out the reaction (E)-4-coumaroyl-CoA + 3 malonyl-CoA + 3 H(+) = 2',4,4',6'-tetrahydroxychalcone + 3 CO2 + 4 CoA. The protein operates within secondary metabolite biosynthesis; flavonoid biosynthesis. Functionally, the primary product of this enzyme is 4,2',4',6'-tetrahydroxychalcone (also termed naringenin-chalcone or chalcone) which can under specific conditions spontaneously isomerize into naringenin. The chain is Chalcone synthase 7 (CHS7) from Sorghum bicolor (Sorghum).